The chain runs to 195 residues: Imidazoleglycerol-phosphate dehydratase (195 aa).

This sequence belongs to the imidazoleglycerol-phosphate dehydratase family.

It localises to the cytoplasm. The catalysed reaction is D-erythro-1-(imidazol-4-yl)glycerol 3-phosphate = 3-(imidazol-4-yl)-2-oxopropyl phosphate + H2O. Its pathway is amino-acid biosynthesis; L-histidine biosynthesis; L-histidine from 5-phospho-alpha-D-ribose 1-diphosphate: step 6/9. The sequence is that of Imidazoleglycerol-phosphate dehydratase from Campylobacter concisus (strain 13826).